A 304-amino-acid chain; its full sequence is Non-specific ribonucleoside hydrolase RihC (304 aa).

His-233 is a catalytic residue.

It belongs to the IUNH family. RihC subfamily.

Its function is as follows. Hydrolyzes both purine and pyrimidine ribonucleosides with a broad-substrate specificity. This Escherichia coli O17:K52:H18 (strain UMN026 / ExPEC) protein is Non-specific ribonucleoside hydrolase RihC.